A 101-amino-acid polypeptide reads, in one-letter code: NAD(P)H-quinone oxidoreductase subunit 4L, chloroplastic (101 aa).

3 helical membrane passes run 2–22 (MLEHVLVLSAYLFSVGLYGLI), 32–52 (MCLELILNAVNINFVTFSDFF), and 61–81 (IFSIFVIAIAAAEAAIGLAIV).

Belongs to the complex I subunit 4L family. As to quaternary structure, NDH is composed of at least 16 different subunits, 5 of which are encoded in the nucleus.

It localises to the plastid. Its subcellular location is the chloroplast thylakoid membrane. It carries out the reaction a plastoquinone + NADH + (n+1) H(+)(in) = a plastoquinol + NAD(+) + n H(+)(out). The catalysed reaction is a plastoquinone + NADPH + (n+1) H(+)(in) = a plastoquinol + NADP(+) + n H(+)(out). Its function is as follows. NDH shuttles electrons from NAD(P)H:plastoquinone, via FMN and iron-sulfur (Fe-S) centers, to quinones in the photosynthetic chain and possibly in a chloroplast respiratory chain. The immediate electron acceptor for the enzyme in this species is believed to be plastoquinone. Couples the redox reaction to proton translocation, and thus conserves the redox energy in a proton gradient. This is NAD(P)H-quinone oxidoreductase subunit 4L, chloroplastic from Daucus carota (Wild carrot).